The primary structure comprises 215 residues: Small ribosomal subunit protein eS1 (215 aa).

Positions 195–215 are disordered; that stretch reads SGMQEPQKNEPAPGGEAIAQN.

Belongs to the eukaryotic ribosomal protein eS1 family.

The protein is Small ribosomal subunit protein eS1 of Thermoplasma acidophilum (strain ATCC 25905 / DSM 1728 / JCM 9062 / NBRC 15155 / AMRC-C165).